The following is a 678-amino-acid chain: Glycine--tRNA ligase beta subunit (678 aa).

The protein belongs to the class-II aminoacyl-tRNA synthetase family. In terms of assembly, tetramer of two alpha and two beta subunits.

The protein resides in the cytoplasm. The catalysed reaction is tRNA(Gly) + glycine + ATP = glycyl-tRNA(Gly) + AMP + diphosphate. The sequence is that of Glycine--tRNA ligase beta subunit from Sulfurihydrogenibium sp. (strain YO3AOP1).